Reading from the N-terminus, the 656-residue chain is Sulfate transporter 1.3 (656 aa).

The interval 1 to 30 (MSARAHPVDDDGEISPVERSSPRQANTPYV) is disordered. Residues 1–94 (MSARAHPVDD…GRKYNLKLFR (94 aa)) lie on the Cytoplasmic side of the membrane. Residues 95–115 (GDLIAGLTIASLCIPQDIGYA) form a helical membrane-spanning segment. Residues 116–119 (KLAS) lie on the Extracellular side of the membrane. A helical transmembrane segment spans residues 120-140 (LDPKYGLYSSFVPPLVYACMG). Over 141–144 (SSKD) the chain is Cytoplasmic. Residues 145 to 165 (IAIGPVAVVSLLLGTLLRAEI) traverse the membrane as a helical segment. The Extracellular segment spans residues 166 to 176 (DPNTNPNEYLR). 2 helical membrane passes run 177–197 (LAFT…FFRL) and 198–218 (GFLI…GAAI). The Extracellular portion of the chain corresponds to 219–256 (TIALQQLKGFLGINKFTKKTDIIAVLSSVISSAHHGWN). The chain crosses the membrane as a helical span at residues 257–277 (WQTILISASFLIFLLISKFIG). Residues 278-283 (KRNKKL) are Cytoplasmic-facing. The helical transmembrane segment at 284–304 (FWIPAIAPLVSVIISTFFVYI) threads the bilayer. Residues 305–342 (TRADKKGVQIVKHLDKGLNPSSLRLIYFSGDYLLKGFR) lie on the Extracellular side of the membrane. Residues 343–363 (IGVVSGMVALTEAVAIGRTFA) traverse the membrane as a helical segment. Residues 364 to 375 (AMKDYQIDGNKE) are Cytoplasmic-facing. A helical transmembrane segment spans residues 376–396 (MVALGAMNVIGSMTSCYVSTG). The Extracellular segment spans residues 397–412 (SFSRSAVNFMAGCQTA). The helical transmembrane segment at 413-433 (VSNIIMSIVVLLTLLFLTPLF) threads the bilayer. Over 434–441 (KYTPNAIL) the chain is Cytoplasmic. A helical transmembrane segment spans residues 442–462 (AAIIINAVIPLVDVNATILIF). Residues 463 to 473 (KIDKLDFVACM) lie on the Extracellular side of the membrane. The helical transmembrane segment at 474 to 494 (GAFFGVIFVSVEIGLLIAVGI) threads the bilayer. Residues 495–656 (SFAKILLQVT…SCSPKLSDEV (162 aa)) are Cytoplasmic-facing. The region spanning 525 to 648 (QYPEATRIPG…LTVAEAVDSC (124 aa)) is the STAS domain.

Belongs to the SLC26A/SulP transporter (TC 2.A.53) family. As to expression, expressed in the phloem of cotyledons, hypocotyls and roots.

Its subcellular location is the membrane. High-affinity H(+)/sulfate cotransporter that mediates the loading of sulfate into the sieve tube. Plays a central role in the regulation of sulfate assimilation. The sequence is that of Sulfate transporter 1.3 (SULTR1;3) from Arabidopsis thaliana (Mouse-ear cress).